Reading from the N-terminus, the 183-residue chain is Helofensin-1 (183 aa).

Positions 1–26 (MQMDWLFIAVVSAIGLLSSGVPGTQG) are cleaved as a signal peptide. The C(6)C(4)C(9)C(6)CC 1; approximate repeat unit spans residues 27 to 64 (AYTTEQCRALNGTCRFYACFPKNVVIGKCDWLGWGCCA). One copy of the C(6)C(4)C(9)C(6)CC 2; approximate repeat lies at 65–101 (RTPLERCTAKKGTCTASGCTETDTDHGPCDGGAQCCQ). One copy of the C(6)C(4)C(9)C(6)CC 3; approximate repeat lies at 102–139 (RDPVKYCKFHGNVCGRGKCPMDHIPIGEQCMPGYPCCK). A C(6)C(4)C(9)C(6)CC 4; approximate repeat occupies 140-177 (RDGPAYCKSKGGKCLRRCSQIVPTDIIGVCADGVPCCK).

This sequence belongs to the beta-defensin family. Helofensin subfamily. Expressed by the mandibular venom gland.

Its subcellular location is the secreted. Its function is as follows. Lethal toxin which possesses an inhibitory effect on direct electrical stimulation of the isolated hemi-diaphragm of mice. Neither hemorrhagic nor hemolytic activities are detected. Phospholipase A2 activity, proteolytic activity and arginine esterolytic activity are absent. This is Helofensin-1 from Heloderma suspectum cinctum (Banded Gila monster).